The primary structure comprises 164 residues: Shikimate kinase (164 aa).

G11–T16 contributes to the ATP binding site. Mg(2+) is bound at residue S15. Substrate-binding residues include D33, R57, and G79. R117 contacts ATP. A substrate-binding site is contributed by R134.

Belongs to the shikimate kinase family. Monomer. Mg(2+) is required as a cofactor.

The protein resides in the cytoplasm. The enzyme catalyses shikimate + ATP = 3-phosphoshikimate + ADP + H(+). It functions in the pathway metabolic intermediate biosynthesis; chorismate biosynthesis; chorismate from D-erythrose 4-phosphate and phosphoenolpyruvate: step 5/7. Functionally, catalyzes the specific phosphorylation of the 3-hydroxyl group of shikimic acid using ATP as a cosubstrate. The polypeptide is Shikimate kinase (Persephonella marina (strain DSM 14350 / EX-H1)).